Here is a 102-residue protein sequence, read N- to C-terminus: Large ribosomal subunit protein bL28 (102 aa).

A disordered region spans residues 1–20 (MSRRCELTAKGPQVGHKVSH).

The protein belongs to the bacterial ribosomal protein bL28 family.

This is Large ribosomal subunit protein bL28 from Bradyrhizobium sp. (strain BTAi1 / ATCC BAA-1182).